The primary structure comprises 73 residues: Small ribosomal subunit protein bS18 (73 aa).

Belongs to the bacterial ribosomal protein bS18 family. In terms of assembly, part of the 30S ribosomal subunit. Forms a tight heterodimer with protein bS6.

Binds as a heterodimer with protein bS6 to the central domain of the 16S rRNA, where it helps stabilize the platform of the 30S subunit. The polypeptide is Small ribosomal subunit protein bS18 (Prochlorococcus marinus subsp. pastoris (strain CCMP1986 / NIES-2087 / MED4)).